A 932-amino-acid polypeptide reads, in one-letter code: UPF0182 protein Syncc9902_1151 (932 aa).

Transmembrane regions (helical) follow at residues 4-24 (FLWI…VEWV), 40-60 (MLQL…VLWL), 85-105 (VLMV…DLAI), 124-144 (MASE…VSLC), 151-171 (WVAV…WGVW), 201-221 (IQLG…HAVW), 243-263 (YRWL…LVWL), 293-313 (LLAF…IGHL), and 315-335 (RLLL…TPLT).

This sequence belongs to the UPF0182 family.

The protein localises to the cell membrane. The protein is UPF0182 protein Syncc9902_1151 of Synechococcus sp. (strain CC9902).